The primary structure comprises 756 residues: ATP-dependent zinc metalloprotease FtsH (756 aa).

At 1 to 44 (MGVPAGMPHPNGLQPQRKDKALAQNPNTPQKGSEAFLKKLIHSS) the chain is on the cytoplasmic side. A helical transmembrane segment spans residues 45-65 (WFFPGAAIVVMLGFLMASFFT). Residues 66-148 (QPSRQVDTNV…SYTDQPVEHS (83 aa)) lie on the Extracellular side of the membrane. A helical transmembrane segment spans residues 149–169 (FLGSLVSLLLPILLFGVLFWF). The Cytoplasmic segment spans residues 170 to 756 (LMGRVGGGSS…NQNGAENERG (587 aa)). 241-248 (GPPGTGKT) contacts ATP. Position 463 (H463) interacts with Zn(2+). E464 is an active-site residue. The Zn(2+) site is built by H467 and D539. Basic and acidic residues-rich tracts occupy residues 647 to 662 (PEREHWYSKPTRERTD) and 672 to 681 (LAKEAEKSEE). Residues 647-756 (PEREHWYSKP…NQNGAENERG (110 aa)) form a disordered region. Low complexity-rich tracts occupy residues 684–703 (AEAPTVPVAPAAPAQQVPVA) and 713–724 (PLTDPDADPTVA). Residues 744–756 (GTPNQNGAENERG) are compositionally biased toward polar residues.

This sequence in the central section; belongs to the AAA ATPase family. The protein in the C-terminal section; belongs to the peptidase M41 family. Homohexamer. The cofactor is Zn(2+).

It localises to the cell membrane. Functionally, acts as a processive, ATP-dependent zinc metallopeptidase for both cytoplasmic and membrane proteins. Plays a role in the quality control of integral membrane proteins. This is ATP-dependent zinc metalloprotease FtsH from Rothia mucilaginosa (strain DY-18) (Stomatococcus mucilaginosus).